A 446-amino-acid polypeptide reads, in one-letter code: Exodeoxyribonuclease 7 large subunit (446 aa).

It belongs to the XseA family. In terms of assembly, heterooligomer composed of large and small subunits.

It is found in the cytoplasm. It catalyses the reaction Exonucleolytic cleavage in either 5'- to 3'- or 3'- to 5'-direction to yield nucleoside 5'-phosphates.. Functionally, bidirectionally degrades single-stranded DNA into large acid-insoluble oligonucleotides, which are then degraded further into small acid-soluble oligonucleotides. The polypeptide is Exodeoxyribonuclease 7 large subunit (Streptococcus thermophilus (strain CNRZ 1066)).